Reading from the N-terminus, the 237-residue chain is MRFAPQLEQGRLLIRYKRFLADIETDSGELLTIHCPNTGSMLNCMMPGGRVWFSRSSDPKRKLPGTWEISETPQGRLACINTGRANTLVEEALRAGVISELEGFTTLKREVAYGQEKSRVDFRLEYPDGYLYLEVKSVTLGFDDSSVAAFPDAVTQRGARHLRELATLAREGVRAVLLYCVNLTGIDAVRPAKEIDPVYAAALREAIDAGVQILAYGVHLTPDEIVIDRRLQVHWLD.

It belongs to the SfsA family.

The polypeptide is Sugar fermentation stimulation protein homolog (Pseudomonas savastanoi pv. phaseolicola (strain 1448A / Race 6) (Pseudomonas syringae pv. phaseolicola (strain 1448A / Race 6))).